Consider the following 665-residue polypeptide: UvrABC system protein C (665 aa).

The 80-residue stretch at 16-95 (ESPGVYRFRD…IKQYDPRFNV (80 aa)) folds into the GIY-YIG domain. Residues 208–243 (DLMVRRLEREMADASAELEFERAARLRDDLAALRRA) enclose the UVR domain. The tract at residues 470 to 507 (EAGVESAGDPATPAGPASTGPGVPDEPRVGTLVDPTTG) is disordered. Residues 475–491 (SAGDPATPAGPASTGPG) are compositionally biased toward low complexity.

Belongs to the UvrC family. Interacts with UvrB in an incision complex.

The protein resides in the cytoplasm. Its function is as follows. The UvrABC repair system catalyzes the recognition and processing of DNA lesions. UvrC both incises the 5' and 3' sides of the lesion. The N-terminal half is responsible for the 3' incision and the C-terminal half is responsible for the 5' incision. The sequence is that of UvrABC system protein C from Salinispora tropica (strain ATCC BAA-916 / DSM 44818 / JCM 13857 / NBRC 105044 / CNB-440).